The following is a 193-amino-acid chain: dCTP deaminase (193 aa).

Residues 110-115 (RSSLAR), aspartate 128, 136-138 (VLE), tyrosine 171, lysine 178, and glutamine 182 each bind dCTP. Glutamate 138 serves as the catalytic Proton donor/acceptor.

The protein belongs to the dCTP deaminase family. Homotrimer.

It catalyses the reaction dCTP + H2O + H(+) = dUTP + NH4(+). Its pathway is pyrimidine metabolism; dUMP biosynthesis; dUMP from dCTP (dUTP route): step 1/2. Functionally, catalyzes the deamination of dCTP to dUTP. The chain is dCTP deaminase from Escherichia coli (strain K12 / MC4100 / BW2952).